The following is a 311-amino-acid chain: Nod factor export ATP-binding protein I (311 aa).

Residues 13–243 (IDLAGVSKSY…QIGCPVIEIY (231 aa)) form the ABC transporter domain. 45-52 (GPNGAGKS) serves as a coordination point for ATP.

It belongs to the ABC transporter superfamily. Lipooligosaccharide exporter (TC 3.A.1.102) family. In terms of assembly, the complex is composed of two ATP-binding proteins (NodI) and two transmembrane proteins (NodJ).

Its subcellular location is the cell inner membrane. Part of the ABC transporter complex NodIJ involved in the export of the nodulation factors (Nod factors), the bacterial signal molecules that induce symbiosis and subsequent nodulation induction. Nod factors are LCO (lipo-chitin oligosaccharide), a modified beta-1,4-linked N-acetylglucosamine oligosaccharide. This subunit is responsible for energy coupling to the transport system. The chain is Nod factor export ATP-binding protein I from Rhizobium leguminosarum bv. viciae.